Reading from the N-terminus, the 445-residue chain is Proline--tRNA ligase (445 aa).

Belongs to the class-II aminoacyl-tRNA synthetase family. ProS type 2 subfamily. As to quaternary structure, homodimer.

Its subcellular location is the cytoplasm. The catalysed reaction is tRNA(Pro) + L-proline + ATP = L-prolyl-tRNA(Pro) + AMP + diphosphate. Functionally, catalyzes the attachment of proline to tRNA(Pro) in a two-step reaction: proline is first activated by ATP to form Pro-AMP and then transferred to the acceptor end of tRNA(Pro). The protein is Proline--tRNA ligase of Cereibacter sphaeroides (strain ATCC 17029 / ATH 2.4.9) (Rhodobacter sphaeroides).